Reading from the N-terminus, the 400-residue chain is Renin (400 aa).

Residues 1–23 (MDAWRGMPRWGLLLLLWGSCTFG) form the signal peptide. The propeptide at 24 to 60 (LPTETTTFKRISLKRMPSIRESLKERGVDMARLGPER) is activation peptide. The N-linked (GlcNAc...) asparagine glycan is linked to Asn65. A Peptidase A1 domain is found at 80–397 (YYGEIGIGTP…DRGNNRIGFA (318 aa)). The active site involves Asp98. A disulfide bridge links Cys111 with Cys118. Residue Asn135 is glycosylated (N-linked (GlcNAc...) asparagine). Cys277 and Cys281 are oxidised to a cystine. The active site involves Asp286. An intrachain disulfide couples Cys319 to Cys356.

It belongs to the peptidase A1 family. In terms of assembly, interacts with ATP6AP2.

The protein resides in the secreted. It is found in the membrane. It carries out the reaction Cleavage of Leu-|-Xaa bond in angiotensinogen to generate angiotensin I.. Its activity is regulated as follows. Interaction with ATP6AP2 results in a 5-fold increased efficiency in angiotensinogen processing. Renin is a highly specific endopeptidase, whose only known function is to generate angiotensin I from angiotensinogen in the plasma, initiating a cascade of reactions that produce an elevation of blood pressure and increased sodium retention by the kidney. This is Renin (REN) from Callithrix jacchus (White-tufted-ear marmoset).